Here is a 210-residue protein sequence, read N- to C-terminus: Large ribosomal subunit protein uL3 (210 aa).

The interval 125–154 is disordered; it reads RHGFRGGPKTHGQSDRHRAPGSIGAGTTPG.

It belongs to the universal ribosomal protein uL3 family. Part of the 50S ribosomal subunit. Forms a cluster with proteins L14 and L19.

Its function is as follows. One of the primary rRNA binding proteins, it binds directly near the 3'-end of the 23S rRNA, where it nucleates assembly of the 50S subunit. The protein is Large ribosomal subunit protein uL3 of Chloroflexus aggregans (strain MD-66 / DSM 9485).